Here is a 146-residue protein sequence, read N- to C-terminus: 3-hydroxyacyl-[acyl-carrier-protein] dehydratase FabZ (146 aa).

The active site involves His49.

The protein belongs to the thioester dehydratase family. FabZ subfamily.

It localises to the cytoplasm. It carries out the reaction a (3R)-hydroxyacyl-[ACP] = a (2E)-enoyl-[ACP] + H2O. Involved in unsaturated fatty acids biosynthesis. Catalyzes the dehydration of short chain beta-hydroxyacyl-ACPs and long chain saturated and unsaturated beta-hydroxyacyl-ACPs. The protein is 3-hydroxyacyl-[acyl-carrier-protein] dehydratase FabZ of Psychrobacter arcticus (strain DSM 17307 / VKM B-2377 / 273-4).